We begin with the raw amino-acid sequence, 322 residues long: ATP-dependent 6-phosphofructokinase (322 aa).

ATP is bound at residue G11. Residue 21–25 (RAVVR) participates in ADP binding. ATP contacts are provided by residues 72-73 (RC) and 102-105 (GDGS). D103 provides a ligand contact to Mg(2+). 127-129 (TID) is a binding site for substrate. D129 functions as the Proton acceptor in the catalytic mechanism. R156 provides a ligand contact to ADP. Residues R164 and 171-173 (MGR) contribute to the substrate site. ADP is bound by residues 187 to 189 (GAE), R213, and 215 to 217 (KKH). Substrate is bound by residues E224, R245, and 251-254 (HVQR).

This sequence belongs to the phosphofructokinase type A (PFKA) family. ATP-dependent PFK group I subfamily. Prokaryotic clade 'B1' sub-subfamily. Homotetramer. Mg(2+) serves as cofactor.

It is found in the cytoplasm. The enzyme catalyses beta-D-fructose 6-phosphate + ATP = beta-D-fructose 1,6-bisphosphate + ADP + H(+). Its pathway is carbohydrate degradation; glycolysis; D-glyceraldehyde 3-phosphate and glycerone phosphate from D-glucose: step 3/4. Allosterically activated by ADP and other diphosphonucleosides, and allosterically inhibited by phosphoenolpyruvate. Catalyzes the phosphorylation of D-fructose 6-phosphate to fructose 1,6-bisphosphate by ATP, the first committing step of glycolysis. This chain is ATP-dependent 6-phosphofructokinase, found in Staphylococcus aureus (strain JH1).